The primary structure comprises 1085 residues: Solute carrier family 12 member 4 (1085 aa).

At 1–119 (MPHFTVVPVD…RRAAEAPSMG (119 aa)) the chain is on the cytoplasmic side. Phosphoserine occurs at positions 24, 47, 51, 81, and 88. The discontinuously helical transmembrane segment at 120–141 (TLMGVYLPCLQNIFGVILFLRL) threads the bilayer. The K(+) site is built by Asn-131 and Ile-132. At 142 to 149 (TWMVGTAG) the chain is on the extracellular side. A helical transmembrane segment spans residues 150-172 (VLQALLIVLICCCCTLLTAISMS). The Cytoplasmic segment spans residues 173 to 196 (AIATNGVVPAGGSYFMISRSLGPE). The chain crosses the membrane as a helical span at residues 197-225 (FGGAVGLCFYLGTTFAAAMYILGAIEILL). Tyr-216 serves as a coordination point for K(+). Residues 226-248 (TYIAPPAAIFYPSGAHDTSNATL) are Extracellular-facing. An N-linked (GlcNAc...) asparagine glycan is attached at Asn-245. Transmembrane regions (helical) follow at residues 249–271 (NNMR…VGVK) and 272–297 (YVNK…GGIK). Topologically, residues 298–419 (SIFDPPVFPV…LYVVADIATS (122 aa)) are extracellular. Residues Cys-308 and Cys-323 are joined by a disulfide bond. Asn-312, Asn-331, Asn-347, and Asn-361 each carry an N-linked (GlcNAc...) asparagine glycan. An intrachain disulfide couples Cys-343 to Cys-353. Residues 420 to 440 (FTVLVGIFFPSVTGIMAGSNR) traverse the membrane as a helical segment. Pro-429 and Thr-432 together coordinate K(+). Chloride contacts are provided by Gly-433, Ile-434, and Met-435. Over 441–450 (SGDLRDAQKS) the chain is Cytoplasmic. The helical transmembrane segment at 451-473 (IPVGTILAIITTSLVYFSSVVLF) threads the bilayer. Residues 474-504 (GACIEGVVLRDKYGDGVSRNLVVGTLAWPSP) lie on the Extracellular side of the membrane. Residues 505–531 (WVIVIGSFFSTCGAGLQSLTGAPRLLQ) form a helical membrane-spanning segment. Residues 532-554 (AIAKDNIIPFLRVFGHGKVNGEP) lie on the Cytoplasmic side of the membrane. 2 helical membrane passes run 555 to 575 (TWAL…ASLD) and 576 to 598 (MVAP…ACAV). Tyr-589 contacts chloride. Over 599-612 (QTLLRTPNWRPRFK) the chain is Cytoplasmic. The next 2 helical transmembrane spans lie at 613–635 (YYHW…VSSW) and 636–651 (YYAL…IYKY). The Cytoplasmic portion of the chain corresponds to 652 to 1085 (IEYQGAEKEW…GGREVITIYS (434 aa)). A scissor helix region spans residues 665 to 681 (IRGLSLSAARYALLRLE). ATP is bound by residues Leu-697, Lys-699, Lys-707, Tyr-708, and Val-730. Position 734 is a phosphoserine (Ser-734). 3 residues coordinate ATP: Gly-794, Trp-795, and Tyr-797. Phosphoserine occurs at positions 916 and 967. Position 983 is a phosphothreonine (Thr-983). A Phosphoserine modification is found at Ser-1050.

Belongs to the SLC12A transporter family. K/Cl co-transporter subfamily. Homodimer; adopts a domain-swap conformation at the scissor helices connecting the transmembrane domain and C-terminal domain. Heterodimer with other K-Cl cotransporters. Phosphorylated, phosphorylation may regulate transporter activity. As to expression, ubiquitous. Levels are much higher in erythrocytes from patients with Hb SC and Hb SS compared to normal AA erythrocytes. This may contribute to red blood cell dehydration and to the manifestation of sickle cell disease by increasing the intracellular concentration of HbS. Not detected in circulating reticulocytes.

Its subcellular location is the cell membrane. It carries out the reaction K(+)(in) + chloride(in) = K(+)(out) + chloride(out). Inhibited by WNK3. In terms of biological role, mediates electroneutral potassium-chloride cotransport when activated by cell swelling. May contribute to cell volume homeostasis in single cells. May be involved in the regulation of basolateral Cl(-) exit in NaCl absorbing epithelia. No transporter activity. This is Solute carrier family 12 member 4 from Homo sapiens (Human).